Consider the following 977-residue polypeptide: Macrophage colony-stimulating factor 1 receptor (977 aa).

Positions 1 to 18 are cleaved as a signal peptide; it reads MFFALLFLIGILLGQVQG. The Extracellular segment spans residues 19-519; the sequence is WSEPRIRLSS…MEVSDQIFTS (501 aa). Ig-like C2-type domains are found at residues 22-109, 120-198, 213-305, 316-407, and 408-513; these read PRIR…VHVF, PSTS…EKVS, PYVY…TQLL, PKLS…ASIT, and FDIK…MEVS. A disulfide bond links Cys48 and Cys92. Residues Asn98, Asn101, Asn154, Asn163, Asn244, Asn286, Asn298, Asn361, Asn424, and Asn455 are each glycosylated (N-linked (GlcNAc...) asparagine). Intrachain disulfides connect Cys138-Cys187 and Cys234-Cys289. A disulfide bridge links Cys430 with Cys495. Residues 520-540 traverse the membrane as a helical segment; that stretch reads AMCGSTVAMVVLGLLLIFMIY. The Cytoplasmic segment spans residues 541–977; it reads KYKQKPRYEI…LMKPNNYQFC (437 aa). The tract at residues 544–576 is regulatory juxtamembrane domain; the sequence is QKPRYEIRWKIIEATNGNNYTFIDPTQLPYNEK. Tyr563 carries the post-translational modification Phosphotyrosine; by autocatalysis. The Protein kinase domain occupies 584–917; it reads LKLGKTLGAG…KISQMIQRML (334 aa). ATP-binding positions include 590–598 and Lys618; that span reads LGAGAFGKV. A phosphotyrosine; by autocatalysis mark is found at Tyr701 and Tyr725. Residue Asp781 is the Proton acceptor of the active site. The activation loop stretch occupies residues 799 to 821; that stretch reads DFGLARDIMNDSNYVVKGNARLP. Phosphotyrosine; by autocatalysis occurs at positions 812 and 929. Residues 919-977 form a disordered region; sequence ETSEQQDTQEYKNIPTEAEAEQQLESCDPVKHEDESFETSCDQEEEDQPLMKPNNYQFC. A compositionally biased stretch (acidic residues) spans 953–966; sequence ESFETSCDQEEEDQ. At Tyr974 the chain carries Phosphotyrosine; by autocatalysis.

It belongs to the protein kinase superfamily. Tyr protein kinase family. CSF-1/PDGF receptor subfamily. Monomer. Homodimer. Interacts with CSF1. In terms of processing, autophosphorylated in response to CSF1 binding. autophosphorylation, leading to its degradation. Ubiquitinated. Becomes rapidly polyubiquitinated after autophosphorylation, leading to its degradation.

It localises to the cell membrane. It carries out the reaction L-tyrosyl-[protein] + ATP = O-phospho-L-tyrosyl-[protein] + ADP + H(+). Its activity is regulated as follows. Present in an inactive conformation in the absence of bound ligand. CSF1 binding leads to dimerization and activation by autophosphorylation on tyrosine residues. In terms of biological role, tyrosine-protein kinase that acts as a cell-surface receptor for CSF1 and plays an essential role in the regulation of survival, proliferation and differentiation of hematopoietic precursor cells, especially mononuclear phagocytes, such as macrophages and monocytes. Plays an important role in innate immunity and in inflammatory processes. Plays an important role in the regulation of osteoclast proliferation and differentiation, the regulation of bone resorption, and is required for normal bone development. Promotes reorganization of the actin cytoskeleton, regulates formation of membrane ruffles, cell adhesion and cell migration. Activates several signaling pathways in response to ligand binding. In Danio rerio (Zebrafish), this protein is Macrophage colony-stimulating factor 1 receptor (csf1r).